Consider the following 379-residue polypeptide: Cytochrome b (379 aa).

The next 4 membrane-spanning stretches (helical) occupy residues 33-53 (FGSL…FLAM), 77-98 (WMIR…FMHV), 113-133 (WNIG…GYVL), and 178-198 (FFAF…VHLL). Heme b-binding residues include histidine 83 and histidine 97. Residues histidine 182 and histidine 196 each coordinate heme b. Residue histidine 201 coordinates a ubiquinone. 4 consecutive transmembrane segments (helical) span residues 226–246 (IKDI…VLFS), 288–308 (LGGV…PMLH), 320–340 (LSQC…WIGG), and 347–367 (FITI…XLMP).

This sequence belongs to the cytochrome b family. The cytochrome bc1 complex contains 11 subunits: 3 respiratory subunits (MT-CYB, CYC1 and UQCRFS1), 2 core proteins (UQCRC1 and UQCRC2) and 6 low-molecular weight proteins (UQCRH/QCR6, UQCRB/QCR7, UQCRQ/QCR8, UQCR10/QCR9, UQCR11/QCR10 and a cleavage product of UQCRFS1). This cytochrome bc1 complex then forms a dimer. It depends on heme b as a cofactor.

The protein localises to the mitochondrion inner membrane. Component of the ubiquinol-cytochrome c reductase complex (complex III or cytochrome b-c1 complex) that is part of the mitochondrial respiratory chain. The b-c1 complex mediates electron transfer from ubiquinol to cytochrome c. Contributes to the generation of a proton gradient across the mitochondrial membrane that is then used for ATP synthesis. The polypeptide is Cytochrome b (MT-CYB) (Chrotogale owstoni (Owston's palm civet)).